We begin with the raw amino-acid sequence, 20 residues long: Unknown protein NF009 from 2D-PAGE (20 aa).

The segment at 1–20 (ATSAAQGAALDESVRKVLKP) is disordered.

The polypeptide is Unknown protein NF009 from 2D-PAGE (Naegleria fowleri (Brain eating amoeba)).